Consider the following 169-residue polypeptide: Caltractin (169 aa).

The tract at residues 1 to 24 (MSYRKTVVSARRDQKKGRVGGLTE) is disordered. EF-hand domains lie at 25 to 60 (EQKQ…LGFE), 61 to 96 (PKKE…KMGE), 98 to 133 (DSRE…LGEN), and 134 to 169 (LTDE…TSLF). Ca(2+) is bound by residues D38, D40, S42, T44, and E49. Positions 147, 149, 151, 153, and 158 each coordinate Ca(2+).

Belongs to the centrin family.

Functionally, this calcium-binding protein is found in the basal body complexes (the functional homolog of the centrosome in animal cell). In mitotic cells it is specifically associated with the poles of the mitotic spindles at the sites of the duplicated basal body complexes. The polypeptide is Caltractin (Dunaliella salina (Green alga)).